A 515-amino-acid chain; its full sequence is Bifunctional purine biosynthesis protein PurH (515 aa).

The 145-residue stretch at 1 to 145 folds into the MGS-like domain; sequence MTKRALISVS…KNHASVTVVV (145 aa).

It belongs to the PurH family.

The enzyme catalyses (6R)-10-formyltetrahydrofolate + 5-amino-1-(5-phospho-beta-D-ribosyl)imidazole-4-carboxamide = 5-formamido-1-(5-phospho-D-ribosyl)imidazole-4-carboxamide + (6S)-5,6,7,8-tetrahydrofolate. It catalyses the reaction IMP + H2O = 5-formamido-1-(5-phospho-D-ribosyl)imidazole-4-carboxamide. Its pathway is purine metabolism; IMP biosynthesis via de novo pathway; 5-formamido-1-(5-phospho-D-ribosyl)imidazole-4-carboxamide from 5-amino-1-(5-phospho-D-ribosyl)imidazole-4-carboxamide (10-formyl THF route): step 1/1. The protein operates within purine metabolism; IMP biosynthesis via de novo pathway; IMP from 5-formamido-1-(5-phospho-D-ribosyl)imidazole-4-carboxamide: step 1/1. This is Bifunctional purine biosynthesis protein PurH from Streptococcus agalactiae serotype Ia (strain ATCC 27591 / A909 / CDC SS700).